Here is a 488-residue protein sequence, read N- to C-terminus: UDP-N-acetylmuramate--L-alanine ligase (488 aa).

127-133 (GTHGKTT) is an ATP binding site.

It belongs to the MurCDEF family.

It localises to the cytoplasm. The catalysed reaction is UDP-N-acetyl-alpha-D-muramate + L-alanine + ATP = UDP-N-acetyl-alpha-D-muramoyl-L-alanine + ADP + phosphate + H(+). The protein operates within cell wall biogenesis; peptidoglycan biosynthesis. Cell wall formation. This is UDP-N-acetylmuramate--L-alanine ligase from Shewanella sp. (strain MR-4).